The primary structure comprises 218 residues: DNA-binding protein HU 2 (218 aa).

The bacterial histone-like domain stretch occupies residues 1–91 (MNKAQLVEAI…QGFKDLVSGS (91 aa)). Residues 101 to 218 (VKKAPKGSLS…TAKKATARKK (118 aa)) are disordered. Residues 118-218 (KAAGKKAAAK…TAKKATARKK (101 aa)) are degenerate repeats region. The segment covering 127–161 (KKATGAAKKTTGAAKKTSAAAKKTTAKKTTGAAKT) has biased composition (low complexity). A compositionally biased stretch (basic residues) spans 162 to 172 (TAKKTTAKKSA). The segment covering 173 to 182 (AKTTTAAAKK) has biased composition (low complexity). The segment covering 183–218 (TAAKKAPAKKATAKKAPAKKSTARKTTAKKATARKK) has biased composition (basic residues).

Belongs to the bacterial histone-like protein family. Long actinobacterial subfamily. As to quaternary structure, homodimer.

The protein localises to the cytoplasm. It localises to the nucleoid. Functionally, histone-like DNA-binding protein which is capable of wrapping DNA to stabilize it, and thus to prevent its denaturation under extreme environmental conditions. This is DNA-binding protein HU 2 (hup2) from Streptomyces coelicolor (strain ATCC BAA-471 / A3(2) / M145).